Here is a 229-residue protein sequence, read N- to C-terminus: tRNA (guanine-N(7)-)-methyltransferase (229 aa).

S-adenosyl-L-methionine is bound by residues Glu-59, Glu-84, Asp-111, and Asp-134. Asp-134 is a catalytic residue. Lys-138 serves as a coordination point for substrate. The interaction with RNA stretch occupies residues 140–145 (KHNKRR). Substrate is bound by residues Asp-170 and 207 to 210 (TKFE).

Belongs to the class I-like SAM-binding methyltransferase superfamily. TrmB family.

The catalysed reaction is guanosine(46) in tRNA + S-adenosyl-L-methionine = N(7)-methylguanosine(46) in tRNA + S-adenosyl-L-homocysteine. The protein operates within tRNA modification; N(7)-methylguanine-tRNA biosynthesis. In terms of biological role, catalyzes the formation of N(7)-methylguanine at position 46 (m7G46) in tRNA. The protein is tRNA (guanine-N(7)-)-methyltransferase of Saccharophagus degradans (strain 2-40 / ATCC 43961 / DSM 17024).